Here is a 378-residue protein sequence, read N- to C-terminus: Apoptosis-inducing factor 1 (378 aa).

Residues 7 to 25 (NIVVVGAGVFGVSVANHLY) traverse the membrane as a helical segment. FAD contacts are provided by residues 12-16 (GAGVF), R51, K56, and D283.

Belongs to the FAD-dependent oxidoreductase family. FAD serves as cofactor.

The protein localises to the mitochondrion outer membrane. The protein resides in the nucleus. Putative FAD-dependent oxidoreductase involved in the resistance to cercosporin and other singlet oxygen-generating photosensitizers. Translocates from mitochondria to the nucleus under apoptotic conditions, where it degrades DNA and induces apoptosis. The protein is Apoptosis-inducing factor 1 (AIF1) of Saccharomyces cerevisiae (strain ATCC 204508 / S288c) (Baker's yeast).